Consider the following 115-residue polypeptide: Meiotically up-regulated gene 168 protein (115 aa).

The tract at residues 82–115 (SVSPVHTKAEEPGLGLTPMNSADFSNKIASRYRS) is disordered. The segment covering 99–109 (PMNSADFSNKI) has biased composition (polar residues).

It localises to the nucleus. Its function is as follows. Has a role in meiosis. In Schizosaccharomyces pombe (strain 972 / ATCC 24843) (Fission yeast), this protein is Meiotically up-regulated gene 168 protein (mug168).